Reading from the N-terminus, the 147-residue chain is Flagellar assembly factor FliW (147 aa).

It belongs to the FliW family. As to quaternary structure, interacts with translational regulator CsrA and flagellin(s).

It is found in the cytoplasm. Its function is as follows. Acts as an anti-CsrA protein, binds CsrA and prevents it from repressing translation of its target genes, one of which is flagellin. Binds to flagellin and participates in the assembly of the flagellum. In Treponema denticola (strain ATCC 35405 / DSM 14222 / CIP 103919 / JCM 8153 / KCTC 15104), this protein is Flagellar assembly factor FliW.